An 82-amino-acid chain; its full sequence is Neuromacin (82 aa).

The signal sequence occupies residues 1–23; sequence MALLNKLLCFALVFMIFGEFVTP. Cystine bridges form between C25–C32, C47–C51, C61–C69, and C79–C81.

The protein belongs to the macin family.

It localises to the secreted. The sequence is that of Neuromacin from Hirudo medicinalis (Medicinal leech).